The following is a 473-amino-acid chain: Photosystem II CP43 reaction center protein (473 aa).

Residues 1–14 constitute a propeptide that is removed on maturation; the sequence is MKILYSLRRFYHVE. Thr-15 bears the N-acetylthreonine mark. Thr-15 is modified (phosphothreonine). Helical transmembrane passes span 69–93, 134–155, 178–200, 255–275, and 291–312; these read LFEV…PHLA, LLGP…KDRN, KALY…RKIT, KPFA…LSYS, and WFNN…ASQA. Glu-367 lines the [CaMn4O5] cluster pocket. Residues 447–471 traverse the membrane as a helical segment; that stretch reads RARAAAAGFEKGIDRDLEPVLYMTP.

This sequence belongs to the PsbB/PsbC family. PsbC subfamily. In terms of assembly, PSII is composed of 1 copy each of membrane proteins PsbA, PsbB, PsbC, PsbD, PsbE, PsbF, PsbH, PsbI, PsbJ, PsbK, PsbL, PsbM, PsbT, PsbX, PsbY, PsbZ, Psb30/Ycf12, at least 3 peripheral proteins of the oxygen-evolving complex and a large number of cofactors. It forms dimeric complexes. It depends on Binds multiple chlorophylls and provides some of the ligands for the Ca-4Mn-5O cluster of the oxygen-evolving complex. It may also provide a ligand for a Cl- that is required for oxygen evolution. PSII binds additional chlorophylls, carotenoids and specific lipids. as a cofactor.

It is found in the plastid. The protein resides in the chloroplast thylakoid membrane. In terms of biological role, one of the components of the core complex of photosystem II (PSII). It binds chlorophyll and helps catalyze the primary light-induced photochemical processes of PSII. PSII is a light-driven water:plastoquinone oxidoreductase, using light energy to abstract electrons from H(2)O, generating O(2) and a proton gradient subsequently used for ATP formation. This is Photosystem II CP43 reaction center protein from Oryza nivara (Indian wild rice).